A 238-amino-acid chain; its full sequence is uncharacterized protein (238 aa).

The next 6 membrane-spanning stretches (helical) occupy residues 24-44, 78-98, 109-129, 156-176, 188-208, and 216-236; these read IFIA…YMKN, GFLL…LPGL, ILFI…IILV, FILL…IQVI, MYAY…IITP, and IIMS…LKIL.

This sequence belongs to the TatC family.

The protein resides in the plastid. The protein localises to the chloroplast membrane. This is an uncharacterized protein from Gracilaria tenuistipitata var. liui (Red alga).